The following is an 87-amino-acid chain: MLFYCVLLYGLCLRFLLFSFRYFMCPRLPSSGNRMIGCLLLLLFYSFWLLRCFFIFFLVSCFIYVVEGGGFIDLPSLRYFTRLFYFV.

The protein belongs to the universal ribosomal protein uS12 family.

The protein localises to the mitochondrion matrix. It localises to the kinetoplast. Its function is as follows. Protein S12 is involved in the translation initiation step. The chain is Small ribosomal subunit protein uS12m (RPS12) from Trypanoplasma borreli.